We begin with the raw amino-acid sequence, 104 residues long: V-type ATP synthase subunit F (104 aa).

The protein belongs to the V-ATPase F subunit family.

Functionally, produces ATP from ADP in the presence of a proton gradient across the membrane. The polypeptide is V-type ATP synthase subunit F (Thermus thermophilus (strain ATCC BAA-163 / DSM 7039 / HB27)).